The following is a 353-amino-acid chain: Quinolinate synthase (353 aa).

The iminosuccinate site is built by His-47 and Ser-68. Cys-113 lines the [4Fe-4S] cluster pocket. Iminosuccinate is bound by residues 139-141 and Ser-156; that span reads YAN. Residue Cys-200 participates in [4Fe-4S] cluster binding. Residues 226–228 and Thr-243 each bind iminosuccinate; that span reads HPE. Cys-297 is a binding site for [4Fe-4S] cluster.

It belongs to the quinolinate synthase family. Type 1 subfamily. The cofactor is [4Fe-4S] cluster.

The protein resides in the cytoplasm. It catalyses the reaction iminosuccinate + dihydroxyacetone phosphate = quinolinate + phosphate + 2 H2O + H(+). Its pathway is cofactor biosynthesis; NAD(+) biosynthesis; quinolinate from iminoaspartate: step 1/1. Its function is as follows. Catalyzes the condensation of iminoaspartate with dihydroxyacetone phosphate to form quinolinate. The polypeptide is Quinolinate synthase (Yersinia pestis bv. Antiqua (strain Antiqua)).